A 369-amino-acid chain; its full sequence is Histidinol-phosphate aminotransferase (369 aa).

An N6-(pyridoxal phosphate)lysine modification is found at Lys222.

The protein belongs to the class-II pyridoxal-phosphate-dependent aminotransferase family. Histidinol-phosphate aminotransferase subfamily. In terms of assembly, homodimer. It depends on pyridoxal 5'-phosphate as a cofactor.

It catalyses the reaction L-histidinol phosphate + 2-oxoglutarate = 3-(imidazol-4-yl)-2-oxopropyl phosphate + L-glutamate. It participates in amino-acid biosynthesis; L-histidine biosynthesis; L-histidine from 5-phospho-alpha-D-ribose 1-diphosphate: step 7/9. In Halalkalibacterium halodurans (strain ATCC BAA-125 / DSM 18197 / FERM 7344 / JCM 9153 / C-125) (Bacillus halodurans), this protein is Histidinol-phosphate aminotransferase.